Here is a 302-residue protein sequence, read N- to C-terminus: Protein transport protein SEC13 homolog B (302 aa).

WD repeat units lie at residues 9 to 48 (GHED…GSQQ), 54 to 95 (GHRG…QWTQ), 101 to 142 (DHKS…GWDT), 148 to 201 (AHPV…WKMD), 208 to 251 (KHTD…EQWE), and 257 to 296 (DFMT…EWEQ).

The protein belongs to the WD repeat SEC13 family. As to quaternary structure, part of the nuclear pore complex (NPC). The NPC has an eight-fold symmetrical structure comprising a central transport channel and two rings, the cytoplasmic and nuclear rings, to which eight filaments are attached. The cytoplasmic filaments have loose ends, while the nuclear filaments are joined in a distal ring, forming a nuclear basket. NPCs are highly dynamic in configuration and composition, and can be devided in 3 subcomplexes, the NUP62 subcomplex, the NUP107-160 subcomplex and the NUP93 subcomplex, containing approximately 30 different nucleoporin proteins. Interacts with MAG5, SEC31A and SEC31B.

The protein resides in the golgi apparatus. Its subcellular location is the endoplasmic reticulum. It is found in the nucleus envelope. The protein localises to the nucleus. It localises to the nuclear pore complex. Functionally, required for protein transport from the endoplasmic reticulum to the Golgi apparatus. The sequence is that of Protein transport protein SEC13 homolog B from Arabidopsis thaliana (Mouse-ear cress).